Reading from the N-terminus, the 84-residue chain is uncharacterized protein (84 aa).

This is an uncharacterized protein from Dictyostelium discoideum (Social amoeba).